We begin with the raw amino-acid sequence, 240 residues long: Sialidase 85-1.2 (240 aa).

Over residues 127 to 142 the composition is skewed to acidic residues; it reads DDDDGGDDDDEEDSQE. 2 disordered regions span residues 127 to 158 and 221 to 240; these read DDDD…GKKP and HRGG…QRDA. Residues 144-155 are compositionally biased toward basic and acidic residues; it reads SSPKESSPEKIG.

Belongs to the glycosyl hydrolase 33 family.

It catalyses the reaction Hydrolysis of alpha-(2-&gt;3)-, alpha-(2-&gt;6)-, alpha-(2-&gt;8)- glycosidic linkages of terminal sialic acid residues in oligosaccharides, glycoproteins, glycolipids, colominic acid and synthetic substrates.. In terms of biological role, developmentally regulated neuraminidase implicated in parasite invasion of cells. May contribute to the pathology during T.cruzi infection by cleaving sialic acid from cells of the immune system. This is Sialidase 85-1.2 (SA85-1.2) from Trypanosoma cruzi.